The chain runs to 70 residues: Guanine nucleotide-binding protein subunit gamma-1 (70 aa).

Position 67 is a cysteine methyl ester (C67). A lipid anchor (S-geranylgeranyl cysteine) is attached at C67. Residues 68 to 70 (TVL) constitute a propeptide, removed in mature form.

The protein belongs to the G protein gamma family. G proteins are composed of 3 units, alpha, beta and gamma. As to expression, predominantly expressed in the central nervous system.

It is found in the cell membrane. In terms of biological role, guanine nucleotide-binding proteins (G proteins) are involved as a modulator or transducer in various transmembrane signaling systems. The beta and gamma chains are required for the GTPase activity, for replacement of GDP by GTP, and for G protein-effector interaction. In Drosophila melanogaster (Fruit fly), this protein is Guanine nucleotide-binding protein subunit gamma-1 (Ggamma1).